The following is a 312-amino-acid chain: MKWSEISIHTTEEAVEAVSHILHEAGASGVAIEDPAELTKEREQQYGEIYALNPAEYPADGVVIKAYFPQTDSLQETIASLKSSIDVLPSYDIEIGTGNITINEVDEEDWATAWKKYYHPVQISDTFTIVPTWEEYTPSSPDEKIIELDPGMAFGTGTHPTTTMCIRALEKTVKPGDTVIDVGTGSGVLSIAAAKLGAASVQAYDLDPVAVESAEMNVRLNKTDDVVSVGQNSLLEGIEGPVDLIVANLLAEIILMFPEDAARVVKQGGLFITSGIIAAKEKTISEALEKAGFTIKEVLRMEDWVAIIAQNA.

S-adenosyl-L-methionine contacts are provided by T162, G183, D205, and N248.

The protein belongs to the methyltransferase superfamily. PrmA family.

It localises to the cytoplasm. It carries out the reaction L-lysyl-[protein] + 3 S-adenosyl-L-methionine = N(6),N(6),N(6)-trimethyl-L-lysyl-[protein] + 3 S-adenosyl-L-homocysteine + 3 H(+). Functionally, methylates ribosomal protein L11. In Bacillus cytotoxicus (strain DSM 22905 / CIP 110041 / 391-98 / NVH 391-98), this protein is Ribosomal protein L11 methyltransferase.